Consider the following 100-residue polypeptide: Small ribosomal subunit protein uS14c (100 aa).

It belongs to the universal ribosomal protein uS14 family. Part of the 30S ribosomal subunit.

It is found in the plastid. The protein localises to the chloroplast. Functionally, binds 16S rRNA, required for the assembly of 30S particles. This Gossypium barbadense (Sea Island cotton) protein is Small ribosomal subunit protein uS14c.